A 310-amino-acid polypeptide reads, in one-letter code: tRNA dimethylallyltransferase (310 aa).

13–20 (GPTASGKT) is an ATP binding site. A substrate-binding site is contributed by 15–20 (TASGKT). 4 interaction with substrate tRNA regions span residues 38 to 41 (DSAL), 162 to 166 (QRLSR), 243 to 248 (RCVGYR), and 276 to 283 (KRQITWLR).

Belongs to the IPP transferase family. Monomer. Requires Mg(2+) as cofactor.

The catalysed reaction is adenosine(37) in tRNA + dimethylallyl diphosphate = N(6)-dimethylallyladenosine(37) in tRNA + diphosphate. Functionally, catalyzes the transfer of a dimethylallyl group onto the adenine at position 37 in tRNAs that read codons beginning with uridine, leading to the formation of N6-(dimethylallyl)adenosine (i(6)A). The polypeptide is tRNA dimethylallyltransferase (Vibrio atlanticus (strain LGP32) (Vibrio splendidus (strain Mel32))).